We begin with the raw amino-acid sequence, 89 residues long: Small ribosomal subunit protein uS15 (89 aa).

This sequence belongs to the universal ribosomal protein uS15 family. As to quaternary structure, part of the 30S ribosomal subunit. Forms a bridge to the 50S subunit in the 70S ribosome, contacting the 23S rRNA.

In terms of biological role, one of the primary rRNA binding proteins, it binds directly to 16S rRNA where it helps nucleate assembly of the platform of the 30S subunit by binding and bridging several RNA helices of the 16S rRNA. Its function is as follows. Forms an intersubunit bridge (bridge B4) with the 23S rRNA of the 50S subunit in the ribosome. This chain is Small ribosomal subunit protein uS15, found in Staphylococcus carnosus (strain TM300).